The chain runs to 110 residues: Cell division protein FtsB (110 aa).

Residues M1–L3 are Cytoplasmic-facing. A helical membrane pass occupies residues I4–L21. Residues G22–R110 lie on the Periplasmic side of the membrane. Residues D31–T64 are a coiled coil.

This sequence belongs to the FtsB family. As to quaternary structure, part of a complex composed of FtsB, FtsL and FtsQ.

The protein resides in the cell inner membrane. In terms of biological role, essential cell division protein. May link together the upstream cell division proteins, which are predominantly cytoplasmic, with the downstream cell division proteins, which are predominantly periplasmic. This is Cell division protein FtsB from Herminiimonas arsenicoxydans.